The following is a 1104-amino-acid chain: Extended synaptotagmin-1 (1104 aa).

An N-acetylmethionine modification is found at Met-1. The Cytoplasmic segment spans residues 1-38 (MERSPGEGPSPSPTDQPSAPSDPTGQPPAAHAKPDPGS). The segment at 1–47 (MERSPGEGPSPSPTDQPSAPSDPTGQPPAAHAKPDPGSGGQPAGPGA) is disordered. Polar residues predominate over residues 15–24 (DQPSAPSDPT). The segment covering 37-47 (GSGGQPAGPGA) has biased composition (gly residues). Residues 39–59 (GGQPAGPGAAGEALAVLTSFG) form a helical membrane-spanning segment. Residues 60 to 62 (KRL) are Lumenal-facing. A helical membrane pass occupies residues 63–83 (LVLIPVYLAGAVGLSVGFVLF). Residues 84-1104 (GLALYLGWRR…LMDDKDKGSS (1021 aa)) lie on the Cytoplasmic side of the membrane. Positions 91-116 (WRRVRDEKERSLRAARQLLDDEEQLT) form a coiled coil. In terms of domain architecture, SMP-LTD spans 135–313 (DVEKAEWLNK…LPNRLLVPLV (179 aa)). C2 domains follow at residues 312 to 433 (LVPD…DDWF), 460 to 580 (QVLQ…QLSS), 627 to 751 (SVDA…DEWL), and 777 to 899 (LEEV…TLNS). Phosphoserine; by CDK5 is present on Ser-324. Ca(2+) contacts are provided by Lys-344, Asp-345, Asp-357, Asp-404, Asp-406, Asp-408, Asp-410, and Asp-411. 3 disordered regions span residues 617–641 (VDSE…TPDS), 813–833 (RKGT…TSHK), and 924–950 (SHSY…VTSS). Lys-817 carries the N6-acetyllysine modification. Ser-820 and Ser-941 each carry phosphoserine. Over residues 925-946 (HSYSHSSSSLSEEPELSGGPPH) the composition is skewed to low complexity. Phosphothreonine is present on Thr-948. Phosphoserine is present on residues Ser-949 and Ser-963. A C2 5 domain is found at 971–1093 (PLGQVKLTVW…DLSQGVARWY (123 aa)). Residue Tyr-1009 is modified to Phosphotyrosine. The tract at residues 1018-1025 (KNRGTKRK) is required for phosphatidylinositol 4,5-bisphosphate-dependent location at the cell membrane. Ser-1034 is modified (phosphoserine).

This sequence belongs to the extended synaptotagmin family. Interacts with ESYT2 and ESYT3. Interacts with ADGRD1; inhibiting the G-protein-coupled receptor activity of ADGRD1. Interaction with ADGRD1 is abolished when cytosolic calcium increases, relieving ADGRD1 G-protein-coupled receptor activity. Interacts (phosphorylated form) with SLC2A4. In terms of processing, phosphorylated on Ser residues in insulin-treated adipocytes (in vitro); this promotes interaction with SLC2A4.

The protein localises to the endoplasmic reticulum membrane. The protein resides in the cell membrane. Its function is as follows. Binds calcium (via the C2 domains) and translocates to sites of contact between the endoplasmic reticulum and the cell membrane in response to increased cytosolic calcium levels. Helps tether the endoplasmic reticulum to the cell membrane and promotes the formation of appositions between the endoplasmic reticulum and the cell membrane. Acts as an inhibitor of ADGRD1 G-protein-coupled receptor activity in absence of cytosolic calcium. Binds glycerophospholipids in a barrel-like domain and may play a role in cellular lipid transport. This Pongo abelii (Sumatran orangutan) protein is Extended synaptotagmin-1 (ESYT1).